Consider the following 512-residue polypeptide: Retinaldehyde dehydrogenase 3 (512 aa).

Residues 1-22 (MATTNGAVENGQPDGKPPALPR) form a disordered region. Ala-2 is modified (N-acetylalanine). NAD(+) is bound by residues Lys-204, Glu-207, and 257–262 (GSTEVG). Glu-280 acts as the Proton acceptor in catalysis. Cys-314 (nucleophile) is an active-site residue. NAD(+)-binding residues include Gln-361 and Glu-411.

It belongs to the aldehyde dehydrogenase family. In terms of assembly, homotetramer. In terms of tissue distribution, detected in embryonic head (at protein level). Ventral retina.

The protein localises to the cytoplasm. The enzyme catalyses retinal + NAD(+) + H2O = retinoate + NADH + 2 H(+). It catalyses the reaction all-trans-retinal + NAD(+) + H2O = all-trans-retinoate + NADH + 2 H(+). The catalysed reaction is all-trans-13,14-dihydroretinal + NAD(+) + H2O = all-trans-13,14-dihydroretinoate + NADH + 2 H(+). It participates in cofactor metabolism; retinol metabolism. Its function is as follows. Catalyzes the NAD-dependent oxidation of aldehyde substrates, such as all-trans-retinal and all-trans-13,14-dihydroretinal, to their corresponding carboxylic acids, all-trans-retinoate and all-trans-13,14-dihydroretinoate, respectively. High specificity for all-trans-retinal as substrate, can also accept acetaldehyde as substrate in vitro but with lower affinity. Required for the biosynthesis of normal levels of retinoate in the embryonic ocular and nasal regions; a critical lipid in the embryonic development of the eye and the nasal region. The chain is Retinaldehyde dehydrogenase 3 (Aldh1a3) from Mus musculus (Mouse).